The sequence spans 633 residues: Mitochondrial Rho GTPase 1 (633 aa).

Residues 1-170 (MATVRICVCG…FFLCQKAVTH (170 aa)) enclose the Miro 1 domain. Residues 1–603 (MATVRICVCG…PRSEEDVEGK (603 aa)) lie on the Cytoplasmic side of the membrane. GTP contacts are provided by residues 10–17 (GDEGTGKS), 59–63 (DTSAL), and 115–118 (NKSD). EF-hand domains follow at residues 186–221 (AAVAALQRIFYLSDKDRDGYLSDKELEDFQMRCFEK) and 306–341 (EGYRFFVNLFLLSDKDNDGGLNDAELASLFAPTPGL). Positions 199, 201, 203, 205, 210, 319, 321, 323, and 330 each coordinate Ca(2+). The interval 398–418 (NPSTTAALKVTRPRKRRKRPG) is disordered. The segment covering 408 to 418 (TRPRKRRKRPG) has biased composition (basic residues). The 167-residue stretch at 422–588 (RNVVLGHVLG…FVHIAEAAME (167 aa)) folds into the Miro 2 domain. Residues 431 to 438 (GPPGSGKS), 467 to 471 (ELPGG), and 537 to 540 (LKAD) each bind GTP. A helical; Anchor for type IV membrane protein membrane pass occupies residues 604-624 (WMAWGIALGAVVCAGAAAVMI). Residues 625 to 633 (WRRVSGSGT) lie on the Mitochondrial intermembrane side of the membrane.

It belongs to the mitochondrial Rho GTPase family.

Its subcellular location is the mitochondrion outer membrane. Mitochondrial GTPase involved in mitochondrial trafficking. Probably involved in control of anterograde transport of mitochondria and their subcellular distribution. In Aspergillus oryzae (strain ATCC 42149 / RIB 40) (Yellow koji mold), this protein is Mitochondrial Rho GTPase 1 (gem1).